Reading from the N-terminus, the 281-residue chain is NAD kinase (281 aa).

The Proton acceptor role is filled by Asp-61. NAD(+) is bound by residues 61-62, 134-135, Arg-145, Asp-164, 175-180, and Gln-234; these read DG, ND, and TAYSLS.

It belongs to the NAD kinase family. A divalent metal cation serves as cofactor.

The protein resides in the cytoplasm. The catalysed reaction is NAD(+) + ATP = ADP + NADP(+) + H(+). In terms of biological role, involved in the regulation of the intracellular balance of NAD and NADP, and is a key enzyme in the biosynthesis of NADP. Catalyzes specifically the phosphorylation on 2'-hydroxyl of the adenosine moiety of NAD to yield NADP. This is NAD kinase from Clostridium botulinum (strain Kyoto / Type A2).